The primary structure comprises 511 residues: Phosphoenolpyruvate carboxylase (511 aa).

It belongs to the PEPCase type 2 family. As to quaternary structure, homotetramer. The cofactor is Mg(2+).

It carries out the reaction oxaloacetate + phosphate = phosphoenolpyruvate + hydrogencarbonate. Functionally, catalyzes the irreversible beta-carboxylation of phosphoenolpyruvate (PEP) to form oxaloacetate (OAA), a four-carbon dicarboxylic acid source for the tricarboxylic acid cycle. The protein is Phosphoenolpyruvate carboxylase of Saccharolobus islandicus (strain Y.G.57.14 / Yellowstone #1) (Sulfolobus islandicus).